The primary structure comprises 540 residues: PTS system alpha-glucoside-specific EIICB component (540 aa).

One can recognise a PTS EIIC type-1 domain in the interval Met1–Glu420. Helical transmembrane passes span Met12–Leu32, Ala87–Met107, Ile130–Val150, Phe174–Trp194, Ile201–Phe221, Ile225–Val245, Phe277–Phe297, Val307–Leu327, Phe329–Met349, Val352–Pro372, and Ser384–Phe404. Residues Leu448–Thr530 enclose the PTS EIIB type-1 domain. The active-site Phosphocysteine intermediate; for EIIB activity is Cys470.

The protein resides in the cell membrane. Its function is as follows. The phosphoenolpyruvate-dependent sugar phosphotransferase system (sugar PTS), a major carbohydrate active -transport system, catalyzes the phosphorylation of incoming sugar substrates concomitantly with their translocation across the cell membrane. This system is involved in alpha-glucoside transport. Functionally, involved in the transport and simultaneous phosphorylation at O-6 of the glucosyl moiety of sucrose and its five linkage-isomeric alpha-D-glucosyl-D-fructoses. Can also transport maltose, isomaltose and maltitol, phosphorylating at O-6 of their non-reducing glucose portion. This is PTS system alpha-glucoside-specific EIICB component (aglA) from Klebsiella pneumoniae.